A 1145-amino-acid polypeptide reads, in one-letter code: Cellulose synthase-like protein D3 (1145 aa).

Over residues 1–19 (MASNNHFMNSRSNLSTNSD) the composition is skewed to polar residues. 2 disordered regions span residues 1-38 (MASN…TFAR) and 189-208 (DNNK…SKMD). The next 2 membrane-spanning stretches (helical) occupy residues 289-309 (VISP…LFLM) and 319-339 (AIWL…SWLL). The active site involves Asp419. Phosphoserine is present on Ser755. The active site involves Asp848. The next 6 membrane-spanning stretches (helical) occupy residues 930 to 950 (FFLI…QFIV), 956 to 976 (TFLV…LLEI), 1002 to 1022 (LAAV…SFTL), 1045 to 1065 (SLMI…AVGF), 1079 to 1099 (LIGG…FAKG), and 1109 to 1129 (TIVY…WVAI).

The protein belongs to the glycosyltransferase 2 family. Plant cellulose synthase-like D subfamily. As to expression, preferentially expressed in root hair cells. Expressed in roots, leaves, stems, flowers and siliques.

Its subcellular location is the golgi apparatus membrane. Thought to be a Golgi-localized beta-glycan synthase that polymerize the backbones of noncellulosic polysaccharides (hemicelluloses) of plant cell wall. Required for synthesis of a cell wall polysaccharide essential for root hair elongation, but not initiation. May be the functional ortholog of rice CSLD1. This chain is Cellulose synthase-like protein D3 (CSLD3), found in Arabidopsis thaliana (Mouse-ear cress).